The sequence spans 49 residues: Small ribosomal subunit protein eS31 (49 aa).

Positions 21, 24, 39, and 42 each coordinate Zn(2+). The C4-type zinc-finger motif lies at 21–42 (CPRCGPGVFLADHKNRLACGKC).

Belongs to the eukaryotic ribosomal protein eS31 family. In terms of assembly, part of the 30S ribosomal subunit. Requires Zn(2+) as cofactor.

In Methanosarcina mazei (strain ATCC BAA-159 / DSM 3647 / Goe1 / Go1 / JCM 11833 / OCM 88) (Methanosarcina frisia), this protein is Small ribosomal subunit protein eS31.